The chain runs to 358 residues: Histidinol-phosphate aminotransferase (358 aa).

Lysine 218 bears the N6-(pyridoxal phosphate)lysine mark.

The protein belongs to the class-II pyridoxal-phosphate-dependent aminotransferase family. Histidinol-phosphate aminotransferase subfamily. Homodimer. It depends on pyridoxal 5'-phosphate as a cofactor.

It catalyses the reaction L-histidinol phosphate + 2-oxoglutarate = 3-(imidazol-4-yl)-2-oxopropyl phosphate + L-glutamate. Its pathway is amino-acid biosynthesis; L-histidine biosynthesis; L-histidine from 5-phospho-alpha-D-ribose 1-diphosphate: step 7/9. The sequence is that of Histidinol-phosphate aminotransferase from Dehalococcoides mccartyi (strain ATCC BAA-2266 / KCTC 15142 / 195) (Dehalococcoides ethenogenes (strain 195)).